A 686-amino-acid polypeptide reads, in one-letter code: Translation initiation factor IF-2 (686 aa).

Residues 54–105 (KPSVADEFEVEEKVVRSKKNSNKKKKKGKGNEDKRQENFAGRQQTQTVETPD) are disordered. Over residues 69–81 (RSKKNSNKKKKKG) the composition is skewed to basic residues. The tr-type G domain maps to 188–357 (ERPAVVTIMG…LLISEVEEYK (170 aa)). The interval 197 to 204 (GHVDHGKT) is G1. A GTP-binding site is contributed by 197–204 (GHVDHGKT). The segment at 222–226 (GITQH) is G2. The tract at residues 243 to 246 (DTPG) is G3. GTP is bound by residues 243-247 (DTPGH) and 297-300 (NKMD). Residues 297 to 300 (NKMD) form a G4 region. The tract at residues 333-335 (SAI) is G5.

This sequence belongs to the TRAFAC class translation factor GTPase superfamily. Classic translation factor GTPase family. IF-2 subfamily.

Its subcellular location is the cytoplasm. Functionally, one of the essential components for the initiation of protein synthesis. Protects formylmethionyl-tRNA from spontaneous hydrolysis and promotes its binding to the 30S ribosomal subunits. Also involved in the hydrolysis of GTP during the formation of the 70S ribosomal complex. This chain is Translation initiation factor IF-2, found in Bacillus anthracis (strain A0248).